The sequence spans 206 residues: Transmembrane emp24 domain-containing protein bai (206 aa).

The first 20 residues, 1–20 (MLKSLLCILLIFGCLCRIHG), serve as a signal peptide directing secretion. The Lumenal segment spans residues 21 to 172 (VMFHLTPNTQ…RDTNEKTNSR (152 aa)). Residues 30-140 (QKCLKEDIQA…LKPLEVDLKR (111 aa)) enclose the GOLD domain. The helical transmembrane segment at 173-193 (VLFFSIFSMCCLLGLATWQVL) threads the bilayer. The Cytoplasmic segment spans residues 194–206 (YLRRYFKAKKLIE).

This sequence belongs to the EMP24/GP25L family.

It localises to the membrane. Functionally, eca and bai are essential, though not redundant, for dorsoventral patterning of the embryo. Specifically required during early embryogenesis for the activity of maternal tkv, while the zygotic tkv is not affected. The sequence is that of Transmembrane emp24 domain-containing protein bai from Drosophila grimshawi (Hawaiian fruit fly).